Reading from the N-terminus, the 698-residue chain is Elongation factor G 2 (698 aa).

A tr-type G domain is found at 8-290; it reads ERYRNIGIMA…AVVDYLPSPV (283 aa). GTP-binding positions include 17-24, 88-92, and 142-145; these read AHIDAGKT, DTPGH, and NKMD.

Belongs to the TRAFAC class translation factor GTPase superfamily. Classic translation factor GTPase family. EF-G/EF-2 subfamily.

Its subcellular location is the cytoplasm. Its function is as follows. Catalyzes the GTP-dependent ribosomal translocation step during translation elongation. During this step, the ribosome changes from the pre-translocational (PRE) to the post-translocational (POST) state as the newly formed A-site-bound peptidyl-tRNA and P-site-bound deacylated tRNA move to the P and E sites, respectively. Catalyzes the coordinated movement of the two tRNA molecules, the mRNA and conformational changes in the ribosome. This is Elongation factor G 2 from Methylococcus capsulatus (strain ATCC 33009 / NCIMB 11132 / Bath).